Here is a 470-residue protein sequence, read N- to C-terminus: Serine carboxypeptidase ctsa-4.1 (470 aa).

Positions 1 to 19 are cleaved as a signal peptide; it reads MKLLSILFIFVSSYSFCLA. The N-linked (GlcNAc...) asparagine glycan is linked to Asn132. Ser169 is a catalytic residue. Asn316 is a glycosylation site (N-linked (GlcNAc...) asparagine). Residue Asp380 is part of the active site. Asn396 carries an N-linked (GlcNAc...) asparagine glycan. His441 is a catalytic residue.

This sequence belongs to the peptidase S10 family.

It carries out the reaction Release of a C-terminal amino acid with broad specificity.. The sequence is that of Serine carboxypeptidase ctsa-4.1 from Caenorhabditis elegans.